A 358-amino-acid chain; its full sequence is Aromatic amino acid aminotransferase (358 aa).

Residue lysine 219 is modified to N6-(pyridoxal phosphate)lysine.

It belongs to the class-II pyridoxal-phosphate-dependent aminotransferase family. As to quaternary structure, homodimer. It depends on pyridoxal 5'-phosphate as a cofactor.

The enzyme catalyses an aromatic L-alpha-amino acid + 2-oxoglutarate = an aromatic oxo-acid + L-glutamate. Aminotransferase that catalyzes the conversion of aromatic amino acids and 2-oxoglutarate into corresponding aromatic oxo acids and L-glutamate. The protein is Aromatic amino acid aminotransferase of Nocardia farcinica (strain IFM 10152).